Consider the following 384-residue polypeptide: Guanine nucleotide-binding protein alpha-1 subunit (384 aa).

The disordered stretch occupies residues 1–22; the sequence is MGSLCSRNKHYSQADDEENTQT. A lipid anchor (N-myristoyl glycine) is attached at Gly-2. Cys-5 is lipidated: S-palmitoyl cysteine. Positions 38 to 384 constitute a G-alpha domain; it reads HIQKLLLLGA…RRNLFEAGLL (347 aa). The interval 41 to 54 is G1 motif; the sequence is KLLLLGAGDSGKST. GTP contacts are provided by Asp-49, Ser-50, Gly-51, Lys-52, Ser-53, Thr-54, Asp-163, Leu-188, Thr-194, Gly-222, Asn-288, Lys-289, Asp-291, and Ala-356. A Mg(2+)-binding site is contributed by Ser-53. The tract at residues 186-194 is G2 motif; sequence DVLFARIRT. Residue Thr-194 coordinates Mg(2+). Positions 215–224 are G3 motif; it reads YRLFDVGGQR. Residues 284–291 form a G4 motif region; the sequence is MLFLNKFD. The segment at 354 to 359 is G5 motif; that stretch reads TTALDQ.

The protein belongs to the G-alpha family. As to quaternary structure, g proteins are composed of 3 units; alpha, beta and gamma. The alpha chain contains the guanine nucleotide binding site. The cofactor is Mg(2+).

Functionally, guanine nucleotide-binding proteins (G proteins) are involved as modulators or transducers in various transmembrane signaling systems. The protein is Guanine nucleotide-binding protein alpha-1 subunit (GPA1) of Solanum lycopersicum (Tomato).